A 377-amino-acid chain; its full sequence is Iris (377 aa).

2 N-linked (GlcNAc...) asparagine glycosylation sites follow: Asn11 and Asn226.

This sequence belongs to the serpin family. Female saliva (at protein level). Female salivary gland (at protein level).

It is found in the secreted. Serine protease inhibitor with anticoagulant and immunosuppressive properties that can modulate blood feeding of ticks on vertebrate species. Strongly inhibits human leukocyte elastase (ELANE) and porcine pancreatic elastase. Moderately inhibits human tPA/tissue-type plasminogen activator (PLAT), coagulation factor Xa (F10), thrombin (F2) and trypsin. Does not inhibit human plasmin (PLG). Inhibits platelet aggregation. Inhibits the intrinsic pathway of blood coagulation in the host. Inhibits fibrinolysis in the host. Inhibits proliferation of mouse splenocytes. Decreases the number of IFN-gamma (IFNG)-producing human peripheral blood mononuclear cells (PBMCs) after stimulation with phytohemagglutinin A (PHA). Increases the number of IL10-producing human PBMCs after stimulation with lipopolysaccharides (LPS) with no significant effect on IL10 production. Inhibits production of IFNG, IL6, TNF-alpha (TNF) and CXCL8 by human PBMCs. Binds to monocyte/macrophage subpopulation of the host PBMCs. Increases both survival rate and survival time in mice with LPS-induced endotoxemic shock. The chain is Iris from Ixodes ricinus (Common tick).